Consider the following 257-residue polypeptide: Large ribosomal subunit protein bL28m (257 aa).

The transit peptide at 1–55 (MPLHRYPVHLWQKLRLRQGICARLPAHFLRSLEEERTPTPVHYKPHGTKFKINPK) directs the protein to the mitochondrion.

Belongs to the bacterial ribosomal protein bL28 family. In terms of assembly, component of the mitochondrial ribosome large subunit (39S) which comprises a 16S rRNA and about 50 distinct proteins. Interacts with OXA1L.

It localises to the mitochondrion. The sequence is that of Large ribosomal subunit protein bL28m (Mrpl28) from Mus musculus (Mouse).